Reading from the N-terminus, the 241-residue chain is DNA repair protein RecO (241 aa).

It belongs to the RecO family.

Involved in DNA repair and RecF pathway recombination. This chain is DNA repair protein RecO, found in Yersinia enterocolitica serotype O:8 / biotype 1B (strain NCTC 13174 / 8081).